The chain runs to 80 residues: Large ribosomal subunit protein bL28 (80 aa).

Positions 1–23 are disordered; the sequence is MARVCQITGKKTRTGNNVSHANN.

This sequence belongs to the bacterial ribosomal protein bL28 family.

The polypeptide is Large ribosomal subunit protein bL28 (Cytophaga hutchinsonii (strain ATCC 33406 / DSM 1761 / CIP 103989 / NBRC 15051 / NCIMB 9469 / D465)).